The sequence spans 154 residues: Homeobox protein engrailed (154 aa).

Positions 37–96 (EKRPRTAFSASQLQRLKQEFQQSNYLTEQRRRSLAKELTLSESQIKIWFQNKRAKIKKAS) form a DNA-binding region, homeobox. Residues 127 to 154 (KLLNGQNTSGDCSRSDYTSDSDGDSLTH) form a disordered region. A compositionally biased stretch (polar residues) spans 129–144 (LNGQNTSGDCSRSDYT). The span at 145 to 154 (SDSDGDSLTH) shows a compositional bias: acidic residues.

It belongs to the engrailed homeobox family.

Its subcellular location is the nucleus. The polypeptide is Homeobox protein engrailed (EN) (Tripneustes gratilla (Hawaian sea urchin)).